A 94-amino-acid polypeptide reads, in one-letter code: Integration host factor subunit beta (94 aa).

This sequence belongs to the bacterial histone-like protein family. As to quaternary structure, heterodimer of an alpha and a beta chain.

In terms of biological role, this protein is one of the two subunits of integration host factor, a specific DNA-binding protein that functions in genetic recombination as well as in transcriptional and translational control. The protein is Integration host factor subunit beta of Histophilus somni (strain 129Pt) (Haemophilus somnus).